We begin with the raw amino-acid sequence, 81 residues long: Cytotoxin 5b (81 aa).

Residues Met1 to Thr21 form the signal peptide. 4 disulfides stabilise this stretch: Cys24–Cys42, Cys35–Cys59, Cys63–Cys74, and Cys75–Cys80.

Belongs to the three-finger toxin family. Short-chain subfamily. Type IA cytotoxin sub-subfamily. In terms of assembly, monomer in solution; Homodimer and oligomer in the presence of negatively charged lipids forming a pore with a size ranging between 20 and 30 Angstroms. In terms of tissue distribution, expressed by the venom gland.

The protein localises to the secreted. It localises to the target cell membrane. Functionally, shows cytolytic activity on many different cells by forming pore in lipid membranes. In vivo, increases heart rate or kills the animal by cardiac arrest. In addition, it binds to heparin with high affinity, interacts with Kv channel-interacting protein 1 (KCNIP1) in a calcium-independent manner, and binds to integrin alpha-V/beta-3 (ITGAV/ITGB3) with moderate affinity. This Naja sputatrix (Malayan spitting cobra) protein is Cytotoxin 5b.